Reading from the N-terminus, the 80-residue chain is uncharacterized protein (80 aa).

The chain crosses the membrane as a helical span at residues 10–29; that stretch reads FVAREYPLVVVPFIYFVLFL.

It localises to the membrane. This is an uncharacterized protein from Saccharomyces cerevisiae (strain ATCC 204508 / S288c) (Baker's yeast).